The following is a 257-amino-acid chain: 3-deoxy-manno-octulosonate cytidylyltransferase (257 aa).

It belongs to the KdsB family.

It localises to the cytoplasm. It carries out the reaction 3-deoxy-alpha-D-manno-oct-2-ulosonate + CTP = CMP-3-deoxy-beta-D-manno-octulosonate + diphosphate. The protein operates within nucleotide-sugar biosynthesis; CMP-3-deoxy-D-manno-octulosonate biosynthesis; CMP-3-deoxy-D-manno-octulosonate from 3-deoxy-D-manno-octulosonate and CTP: step 1/1. Its pathway is bacterial outer membrane biogenesis; lipopolysaccharide biosynthesis. Functionally, activates KDO (a required 8-carbon sugar) for incorporation into bacterial lipopolysaccharide in Gram-negative bacteria. The protein is 3-deoxy-manno-octulosonate cytidylyltransferase of Methylobacillus flagellatus (strain ATCC 51484 / DSM 6875 / VKM B-1610 / KT).